A 210-amino-acid polypeptide reads, in one-letter code: NADH dehydrogenase [ubiquinone] iron-sulfur protein 8, mitochondrial (210 aa).

A mitochondrion-targeting transit peptide spans 1–34 (MRCLTTPMLLRALAQAARAGPPGGRSLHSSAVAA). 4Fe-4S ferredoxin-type domains lie at 102–131 (RRYPSGEERCIACKLCEAICPAQAITIEAE) and 141–170 (TRYDIDMTKCIYCGFCQEACPVDAIVEGPN). Cysteine 111, cysteine 114, cysteine 117, cysteine 121, cysteine 150, cysteine 153, cysteine 156, and cysteine 160 together coordinate [4Fe-4S] cluster.

It belongs to the complex I 23 kDa subunit family. In terms of assembly, core subunit of respiratory chain NADH dehydrogenase (Complex I) which is composed of 45 different subunits. This is a component of the iron-sulfur (IP) fragment of the enzyme. Interacts with RAB5IF. It depends on [4Fe-4S] cluster as a cofactor. As to expression, expressed in all tissues with the highest level in heart and skeletal muscle and the lowest level in lung.

Its subcellular location is the mitochondrion inner membrane. The enzyme catalyses a ubiquinone + NADH + 5 H(+)(in) = a ubiquinol + NAD(+) + 4 H(+)(out). Functionally, core subunit of the mitochondrial membrane respiratory chain NADH dehydrogenase (Complex I) which catalyzes electron transfer from NADH through the respiratory chain, using ubiquinone as an electron acceptor. Essential for the catalytic activity and assembly of complex I. The protein is NADH dehydrogenase [ubiquinone] iron-sulfur protein 8, mitochondrial (NDUFS8) of Homo sapiens (Human).